The following is a 248-amino-acid chain: Probable transcriptional regulatory protein Acid_5948 (248 aa).

This sequence belongs to the TACO1 family.

Its subcellular location is the cytoplasm. The polypeptide is Probable transcriptional regulatory protein Acid_5948 (Solibacter usitatus (strain Ellin6076)).